The sequence spans 328 residues: Phosphate acetyltransferase (328 aa).

It belongs to the phosphate acetyltransferase and butyryltransferase family.

It is found in the cytoplasm. The enzyme catalyses acetyl-CoA + phosphate = acetyl phosphate + CoA. It participates in metabolic intermediate biosynthesis; acetyl-CoA biosynthesis; acetyl-CoA from acetate: step 2/2. This Staphylococcus aureus (strain COL) protein is Phosphate acetyltransferase (pta).